Consider the following 571-residue polypeptide: Methionine--tRNA ligase (571 aa).

Residues Pro-10–Asn-20 carry the 'HIGH' region motif. The Zn(2+) site is built by Cys-143, Cys-146, Cys-156, and Cys-159. A 'KMSKS' region motif is present at residues Lys-333–Ser-337. Lys-336 serves as a coordination point for ATP.

The protein belongs to the class-I aminoacyl-tRNA synthetase family. MetG type 1 subfamily. The cofactor is Zn(2+).

It is found in the cytoplasm. The catalysed reaction is tRNA(Met) + L-methionine + ATP = L-methionyl-tRNA(Met) + AMP + diphosphate. Its function is as follows. Is required not only for elongation of protein synthesis but also for the initiation of all mRNA translation through initiator tRNA(fMet) aminoacylation. This chain is Methionine--tRNA ligase, found in Sulfolobus acidocaldarius (strain ATCC 33909 / DSM 639 / JCM 8929 / NBRC 15157 / NCIMB 11770).